Here is a 399-residue protein sequence, read N- to C-terminus: Elongation factor Tu (399 aa).

A tr-type G domain is found at 10–209; it reads KPHVNIGTIG…EVDAYIPTPV (200 aa). Positions 19–26 are G1; sequence GHVDHGKT. Position 19–26 (19–26) interacts with GTP; it reads GHVDHGKT. Thr26 is a Mg(2+) binding site. The segment at 60–64 is G2; the sequence is GITIA. The segment at 81-84 is G3; that stretch reads DCPG. GTP-binding positions include 81–85 and 136–139; these read DCPGH and NKQD. The G4 stretch occupies residues 136–139; that stretch reads NKQD. A G5 region spans residues 174–176; the sequence is SAL.

It belongs to the TRAFAC class translation factor GTPase superfamily. Classic translation factor GTPase family. EF-Tu/EF-1A subfamily. Monomer.

Its subcellular location is the cytoplasm. It catalyses the reaction GTP + H2O = GDP + phosphate + H(+). Functionally, GTP hydrolase that promotes the GTP-dependent binding of aminoacyl-tRNA to the A-site of ribosomes during protein biosynthesis. This is Elongation factor Tu from Helicobacter acinonychis (strain Sheeba).